Consider the following 718-residue polypeptide: Receptor-like protein 36 (718 aa).

The signal sequence occupies residues 1–26 (MIRSLSYCFLTIYFFLSILPLPNTIA). Topologically, residues 27 to 695 (CPTRLLCRSD…SESEDQLLNW (669 aa)) are extracellular. 18 LRR repeats span residues 70–94 (DAILGELVLSRCKLQGEIPSSIGNL), 95–118 (SHLTYLDLSNNQLVGEVPASIGNL), 120–141 (QLESMRLWDNDLKGNIPTSFAN), 143–165 (TKLSELYLFGNQFTGGDTVLANL), 166–188 (TSLSIIDLSLNYFKSSISADLSG), 189–213 (LHNLERFSVYNNSFSGPFPLSLLMI), 214–238 (PSLVHIDLSQNHFEGPIDFRNTFSL), 239–261 (SRLRVLYVGFNNLDGLIPESISK), 262–286 (LVNLEYLDVSHNNFGGQVPRSISKV), 288–310 (NLTSVDLSYNKLEGQVPDFVWRS), 312–334 (KLDYVDLSYNSFNCFAKSVEVID), 335–359 (GASLTMLNLGSNSVDGPFPKWICKV), 360–383 (KDLYALDLSNNHFNGSIPQCLKYS), 384–406 (TYFHTLNLRNNSLSGVLPNLFIK), 407–431 (DSQLRSLDVSSNNLVGKLPKSLINC), 433–454 (RIEFLNVKGNKIMDTFPFWLGS), 455–480 (LPYLKVLMLGSNAFYGPVYNPSAYLG), and 481–505 (FPSIRIIDISNNNFVGSLPQDYFAN). A glycan (N-linked (GlcNAc...) asparagine) is linked at asparagine 93. N-linked (GlcNAc...) asparagine glycans are attached at residues asparagine 141 and asparagine 164. Asparagine 199 carries N-linked (GlcNAc...) asparagine glycosylation. N-linked (GlcNAc...) asparagine glycosylation occurs at asparagine 288. Residues asparagine 373 and asparagine 393 are each glycosylated (N-linked (GlcNAc...) asparagine). A glycan (N-linked (GlcNAc...) asparagine) is linked at asparagine 528. 4 LRR repeats span residues 550–574 (FEGFNAIDFSGNRFSGHIPGSIGLL), 575–598 (SELRLLNLSGNAFTGNIPPSLANI), 599–622 (TNLESLDLSRNNLSGEIPISLGKL), and 624–647 (FLSNTNFSYNHLEGLIPQSTQFAT). N-linked (GlcNAc...) asparagine glycosylation is found at asparagine 581, asparagine 597, asparagine 610, asparagine 629, and asparagine 649. The helical transmembrane segment at 696–716 (IAAAIAFGPGMFCGLVIGHIF) threads the bilayer. At 717-718 (TS) the chain is on the cytoplasmic side.

This sequence belongs to the RLP family.

The protein resides in the cell membrane. The chain is Receptor-like protein 36 from Arabidopsis thaliana (Mouse-ear cress).